Consider the following 3072-residue polypeptide: E1A-binding protein p400 (3072 aa).

The span at methionine 1 to glycine 22 shows a compositional bias: polar residues. Disordered regions lie at residues methionine 1–tyrosine 55, proline 125–valine 149, and leucine 222–glutamine 250. Residues proline 31–proline 40 show a composition bias toward pro residues. 2 stretches are compositionally biased toward low complexity: residues phenylalanine 41–proline 53 and proline 125–threonine 136. Residues serine 52 and serine 134 each carry the phosphoserine modification. A phosphoserine mark is found at serine 315 and serine 321. 3 disordered regions span residues serine 485–arginine 519, methionine 544–proline 601, and alanine 635–lysine 769. The span at glutamine 556 to glutamine 569 shows a compositional bias: low complexity. Residues tyrosine 570–serine 583 show a composition bias toward polar residues. The segment covering threonine 586–serine 599 has biased composition (pro residues). Composition is skewed to low complexity over residues proline 646 to leucine 657, glutamine 668 to threonine 682, and serine 695 to glycine 710. 2 stretches are compositionally biased toward polar residues: residues asparagine 724–serine 741 and serine 754–glycine 765. Serine 735, serine 741, and serine 754 each carry phosphoserine. Residues leucine 798 to alanine 870 enclose the HSA domain. Residues glutamate 914–leucine 928 are compositionally biased toward basic and acidic residues. 2 disordered regions span residues glutamate 914 to glutamate 952 and phenylalanine 997 to serine 1024. Position 922 is a phosphothreonine (threonine 922). Serine 923, serine 927, and serine 940 each carry phosphoserine. Threonine 944 bears the Phosphothreonine mark. Residues aspartate 950 to glutamine 1364 are interactions with RUVBL1 and RUVBL2. Residues serine 1009 and serine 1010 each carry the phosphoserine modification. The Helicase ATP-binding domain occupies alanine 1102–glycine 1267. Aspartate 1115–threonine 1122 contributes to the ATP binding site. A DEAD box-like motif is present at residues aspartate 1218–glutamine 1221. Lysine 1471 is subject to N6-acetyllysine. The disordered stretch occupies residues glutamate 1473–glycine 1503. Positions alanine 1488–glycine 1499 are enriched in polar residues. Residues serine 1646 and serine 1650 each carry the phosphoserine modification. The region spanning lysine 1815 to threonine 1972 is the Helicase C-terminal domain. 2 disordered regions span residues alanine 2033–proline 2062 and lysine 2203–valine 2227. Low complexity predominate over residues glycine 2043–serine 2053. N6-acetyllysine occurs at positions 2265 and 2272. In terms of domain architecture, Myb-like spans glutamate 2276–isoleucine 2345. The segment at lysine 2440–threonine 2699 is interaction with ZNF42. Residues glutamate 2441–threonine 2534 form a disordered region. Composition is skewed to low complexity over residues alanine 2446–proline 2455 and glutamine 2463–glutamine 2478. Positions glutamine 2479–glutamine 2493 are enriched in pro residues. The span at proline 2494–glutamine 2526 shows a compositional bias: low complexity. The residue at position 2614 (serine 2614) is a Phosphoserine. Disordered stretches follow at residues glutamine 2734–threonine 2790 and alanine 3028–glutamine 3072. Residues proline 2739 to glutamine 2754 are compositionally biased toward pro residues. Residues proline 2755–threonine 2775 show a composition bias toward low complexity. Residues proline 3042–lysine 3053 show a composition bias toward polar residues.

It belongs to the SNF2/RAD54 helicase family. SWR1 subfamily. As to quaternary structure, component of the NuA4 histone acetyltransferase complex which contains the catalytic subunit KAT5/TIP60 and the subunits EP400, TRRAP/PAF400, BRD8/SMAP, EPC1, DMAP1/DNMAP1, RUVBL1/TIP49, RUVBL2, ING3, actin, ACTL6A/BAF53A, MORF4L1/MRG15, MORF4L2/MRGX, MRGBP, YEATS4/GAS41, VPS72/YL1 and MEAF6. May also participate in the formation of NuA4 related complexes which lack the KAT5/TIP60 catalytic subunit, but which include the SWI/SNF related protein SRCAP. The NuA4 complex interacts with MYC. EP400 interacts with TRRAP, RUVBL1 and RUVBL2. Component of a SWR1-like complex. Interacts with ZNF42. Interacts with PHF5A. In terms of tissue distribution, expressed in brain, thymus, lung, liver, spleen, kidney, colon and bone marrow.

The protein resides in the nucleus. Functionally, component of the NuA4 histone acetyltransferase complex which is involved in transcriptional activation of select genes principally by acetylation of nucleosomal histones H4 and H2A. This modification may both alter nucleosome - DNA interactions and promote interaction of the modified histones with other proteins which positively regulate transcription. May be required for transcriptional activation of E2F1 and MYC target genes during cellular proliferation. The NuA4 complex ATPase and helicase activities seem to be, at least in part, contributed by the association of RUVBL1 and RUVBL2 with EP400. Component of a SWR1-like complex that specifically mediates the removal of histone H2A.Z/H2AZ1 from the nucleosome. Regulates transcriptional activity of ZNF42. This chain is E1A-binding protein p400 (Ep400), found in Mus musculus (Mouse).